Here is an 88-residue protein sequence, read N- to C-terminus: MAEVEKTVRTLTGRVVSDKMDKTITVLIERRVKHPIYGKYVKRSTKLHAHDESNQCKIGDKVSIRETRPQSKTKSWALVEVVERAVEV.

This sequence belongs to the universal ribosomal protein uS17 family. In terms of assembly, part of the 30S ribosomal subunit.

Functionally, one of the primary rRNA binding proteins, it binds specifically to the 5'-end of 16S ribosomal RNA. The protein is Small ribosomal subunit protein uS17 of Ectopseudomonas mendocina (strain ymp) (Pseudomonas mendocina).